Reading from the N-terminus, the 181-residue chain is Large ribosomal subunit protein uL5 (181 aa).

Belongs to the universal ribosomal protein uL5 family. Part of the 50S ribosomal subunit; contacts the 5S rRNA and probably tRNA. Forms a bridge to the 30S subunit in the 70S ribosome.

Its function is as follows. This is one of the proteins that bind and probably mediate the attachment of the 5S RNA into the large ribosomal subunit, where it forms part of the central protuberance. In the 70S ribosome it contacts protein S13 of the 30S subunit (bridge B1b), connecting the 2 subunits; this bridge is implicated in subunit movement. May contact the P site tRNA; the 5S rRNA and some of its associated proteins might help stabilize positioning of ribosome-bound tRNAs. This chain is Large ribosomal subunit protein uL5, found in Methanococcus maripaludis (strain C6 / ATCC BAA-1332).